The primary structure comprises 552 residues: Putative transport protein PBPRA2144 (552 aa).

The next 5 helical transmembrane spans lie at 4–24, 26–46, 65–85, 95–115, and 158–178; these read IALSISILALVAVLGLWIGNW, ICGVGLGIGGVLFGGIFVGHF, FGLILFVYTIGIQVGPGFFAS, AFAALVVLLGCIVAIGLYKIF, and MGYAVAYPFGICGILLTMWIL. RCK C-terminal domains lie at 188–276 and 279–361; these read KEAE…VIGE and DASL…IVGN. Helical transmembrane passes span 371 to 391, 394 to 414, 439 to 459, 464 to 484, 493 to 513, and 532 to 552; these read MLPVFVGIGLGVLLGSIPFYL, FPAAIKLGLAGGPLLVALILA, IVLFLAVVGLKSGGGFVDTLV, LSWMGYGIVITLVPLLTVGFL, YLTICGMLAGSMTDPPALAFA, and PLVMCLRILSPQILALLLWAV.

It belongs to the AAE transporter (TC 2.A.81) family. YidE subfamily.

It localises to the cell membrane. The sequence is that of Putative transport protein PBPRA2144 from Photobacterium profundum (strain SS9).